A 285-amino-acid chain; its full sequence is Bifunctional protein FolD (285 aa).

Residues 164–166 (GRS), S193, and I234 each bind NADP(+).

This sequence belongs to the tetrahydrofolate dehydrogenase/cyclohydrolase family. Homodimer.

The enzyme catalyses (6R)-5,10-methylene-5,6,7,8-tetrahydrofolate + NADP(+) = (6R)-5,10-methenyltetrahydrofolate + NADPH. The catalysed reaction is (6R)-5,10-methenyltetrahydrofolate + H2O = (6R)-10-formyltetrahydrofolate + H(+). It participates in one-carbon metabolism; tetrahydrofolate interconversion. Its function is as follows. Catalyzes the oxidation of 5,10-methylenetetrahydrofolate to 5,10-methenyltetrahydrofolate and then the hydrolysis of 5,10-methenyltetrahydrofolate to 10-formyltetrahydrofolate. The polypeptide is Bifunctional protein FolD (Desulfovibrio desulfuricans (strain ATCC 27774 / DSM 6949 / MB)).